The primary structure comprises 134 residues: MGKDTIANIITYIRNADINKKGMVQLPFTNITEKIVKILLREGFVENIRKHRENDKSFLVLTLRYRRNRKESYKSFLNLKRISTPGLRIYYNYKKIPRILGGMGIVILSTSRGIMTDREARLEKIGGEVLCYIW.

The protein belongs to the universal ribosomal protein uS8 family. In terms of assembly, part of the 30S ribosomal subunit.

It is found in the plastid. Its subcellular location is the chloroplast. Its function is as follows. One of the primary rRNA binding proteins, it binds directly to 16S rRNA central domain where it helps coordinate assembly of the platform of the 30S subunit. The polypeptide is Small ribosomal subunit protein uS8c (rps8) (Phaseolus vulgaris (Kidney bean)).